We begin with the raw amino-acid sequence, 1331 residues long: MLNLIKNVIRSLKSAKIALIALTFLIFVAVGGFVLLNNTVNNFNAAFNYVTHTGKLSNAIINERYDFGKLEFQEQTNNSQNSSDSFTLTLTNDSRTSFINNALRTNPSLYEGLVTQTFSYQNKTEMTEKTNIVNQSKIIAANNLNNALSKDKQLLVSGQLEKLNAVFREYKAINITDKSVFKKLIVSEPNDLVNSLVIFDGQNLSSSKQSDFNNFLNQFNEIKSKGKDNLSTTLKTGQYQAFLQTLFDYAQASETTLKDQLQKLISNPDSSETNQVKNLFDTPSTLTNIGGQLTLQWTENSLTKQIVIFDPSSYETIVAPGNWTYQQQLGKEVYPDINNWESIKKLPLEQFESEFLKIDQKYKISIDNIDYLVIGVGISPDFVYPVFSASLIVPNIENEQLYYVNQTGYERTFSSFLTNPVETAIVARLINLESDLNTINQWAVENMSWPTNIKAAYSSSDTTNILNLLAARTVFIPNLINTINLVALFLTIAILTVAIIVSILILISYLKKNTEQIGILKANGLSGKKINLSLLIFGLIPAIVGAISGYSFGIGFQDVAIHLFSNYWFIPTATSSFSVVGLLFFSLFVILIMSSISLLVGSIILKKDVVKILKHDSEFKVSRLGLSSKKLFARFGIMTRFRVALAFNAPWKLVFLTLMSSFTMMILNLSFATKDSFENAQSKTNLTNQNHQYEFELASATTQSGLLKWQLFAELGTTDKRSESSVKLANKRMDISNVDASKDWKNQQVINFLSDASGFSNDLNYLENIVQSKIGLDYSLGFNNIVSNPWRLSETLMPTNQASASNTAFQNFLKAIITINPSQGSQFIKQTQDPLTKRFIYAIDSDKALKNNNEQNGSQNHLTLNDDFAKFLYSQFELIKKSGNASNEDLNAIDFENPQTIRDFYNKYNALPPLDYKLSFNVIGLPKETIAGQIDTPKYGFLTLHGEYQNTPIKIKGIKDWKDKVDNLGPVLSDQNNHIINQELFKNYSFDPLIVNNSAAKKYQLAIGSEINIAVNNSFKRIDNKIINQDPLVNATFRVVGINNSAHDPEFFTSYSTAFKVLEYPNEWFVKKLPFNSFYANSLLSFVQSTSLFSESGIFPATSSFSTNNTVLVELIKKTINYKNGQMNQTSSNDSSKKENYQKLQKALGISTDLEISKVNEYVAILARVYNGLPYNSTISFISNVAANNALFGNIANTTKQIQAVVIAVIIPIIMLIILLVSTTLIQELKKIAIRLKALGYSNLKILASFLSIYIPLFAFGLLISIPFSIYLIALHNEVIFASSSIFLDAFLSFESAIGSMLVLLAVLSITFVLNWLELNKIKIDKEIKNS.

Helical transmembrane passes span 373 to 393 (VIGV…SLIV), 487 to 507 (ALFL…LILI), 534 to 554 (LLIF…SFGI), 579 to 599 (VVGL…ISLL), 653 to 673 (LVFL…SFAT), 1206 to 1226 (VIAV…TTLI), 1255 to 1275 (IPLF…LIAL), and 1297 to 1317 (AIGS…LNWL).

The protein belongs to the ABC-4 integral membrane protein family.

It localises to the cell membrane. This is an uncharacterized protein from Mycoplasma genitalium (strain ATCC 33530 / DSM 19775 / NCTC 10195 / G37) (Mycoplasmoides genitalium).